A 94-amino-acid polypeptide reads, in one-letter code: Large ribosomal subunit protein uL23 (94 aa).

It belongs to the universal ribosomal protein uL23 family. As to quaternary structure, part of the 50S ribosomal subunit. Contacts protein L29, and trigger factor when it is bound to the ribosome.

Its function is as follows. One of the early assembly proteins it binds 23S rRNA. One of the proteins that surrounds the polypeptide exit tunnel on the outside of the ribosome. Forms the main docking site for trigger factor binding to the ribosome. The polypeptide is Large ribosomal subunit protein uL23 (Phytoplasma australiense).